A 324-amino-acid chain; its full sequence is dITP/XTP pyrophosphatase (324 aa).

Positions 1 to 126 (MTKSIFEYKD…SDNKSDFGDV (126 aa)) are unknown. The NTP pyrophosphatase stretch occupies residues 127 to 324 (LLIATRNEGK…EVFPAWQNKQ (198 aa)). Substrate is bound at residue 131–136 (TRNEGK). Residue aspartate 193 is the Proton acceptor of the active site. Aspartate 193 serves as a coordination point for Mg(2+). Substrate is bound by residues serine 194, 277-280 (FGYD), lysine 300, and 305-306 (HR).

Belongs to the HAM1 NTPase family. As to quaternary structure, homodimer. Mg(2+) serves as cofactor.

The enzyme catalyses XTP + H2O = XMP + diphosphate + H(+). The catalysed reaction is dITP + H2O = dIMP + diphosphate + H(+). It carries out the reaction ITP + H2O = IMP + diphosphate + H(+). Its function is as follows. Pyrophosphatase that catalyzes the hydrolysis of nucleoside triphosphates to their monophosphate derivatives, with a high preference for the non-canonical purine nucleotides XTP (xanthosine triphosphate), dITP (deoxyinosine triphosphate) and ITP. Seems to function as a house-cleaning enzyme that removes non-canonical purine nucleotides from the nucleotide pool, thus preventing their incorporation into DNA/RNA and avoiding chromosomal lesions. This chain is dITP/XTP pyrophosphatase, found in Streptococcus thermophilus (strain CNRZ 1066).